We begin with the raw amino-acid sequence, 353 residues long: Carbamoyl phosphate synthase arginine-specific small chain (353 aa).

Residues 1–162 form a CPSase region; the sequence is MEGYLVLEDG…EISTFGDGNK (162 aa). Residues S44, G210, and G212 each coordinate L-glutamine. The 187-residue stretch at 163 to 349 folds into the Glutamine amidotransferase type-1 domain; it reads HIALIDFGYK…LKNVIPARRE (187 aa). C237 acts as the Nucleophile in catalysis. L-glutamine contacts are provided by L238, Q241, N279, and Y282. Residues H322 and E324 contribute to the active site.

This sequence belongs to the CarA family. Composed of two chains; the small (or glutamine) chain promotes the hydrolysis of glutamine to ammonia, which is used by the large (or ammonia) chain to synthesize carbamoyl phosphate. Tetramer of heterodimers (alpha,beta)4.

It carries out the reaction hydrogencarbonate + L-glutamine + 2 ATP + H2O = carbamoyl phosphate + L-glutamate + 2 ADP + phosphate + 2 H(+). The enzyme catalyses L-glutamine + H2O = L-glutamate + NH4(+). Its pathway is amino-acid biosynthesis; L-arginine biosynthesis; carbamoyl phosphate from bicarbonate: step 1/1. Functionally, small subunit of the glutamine-dependent carbamoyl phosphate synthetase (CPSase). CPSase catalyzes the formation of carbamoyl phosphate from the ammonia moiety of glutamine, carbonate, and phosphate donated by ATP, constituting the first step of the biosynthetic pathway leading to arginine and/or urea. The small subunit (glutamine amidotransferase) binds and cleaves glutamine to supply the large subunit with the substrate ammonia. The protein is Carbamoyl phosphate synthase arginine-specific small chain of Bacillus subtilis (strain 168).